We begin with the raw amino-acid sequence, 1220 residues long: Post-transcriptional regulator MKT1L (1220 aa).

The tract at residues 1–107 (MRKAGANRNN…SPWNSPPQQT (107 aa)) is disordered. Residues 34 to 70 (PHHHQHQHHHQHQHQHQHQHQHPHQHPHQHHHHHPHH) are compositionally biased toward basic residues.

It belongs to the XPG/RAD2 endonuclease family. As to quaternary structure, forms a complex composed of at least MKT1L, PBP1, XAC1 and LSM12.

It localises to the cytoplasm. Functionally, involved in post-transcriptional regulation of gene expression. The polypeptide is Post-transcriptional regulator MKT1L (Trypanosoma brucei brucei (strain 927/4 GUTat10.1)).